The following is a 179-amino-acid chain: Large ribosomal subunit protein uL6 (179 aa).

Belongs to the universal ribosomal protein uL6 family. As to quaternary structure, part of the 50S ribosomal subunit.

Its function is as follows. This protein binds to the 23S rRNA, and is important in its secondary structure. It is located near the subunit interface in the base of the L7/L12 stalk, and near the tRNA binding site of the peptidyltransferase center. This Prochlorococcus marinus (strain MIT 9313) protein is Large ribosomal subunit protein uL6.